The chain runs to 450 residues: ATP-dependent protease ATPase subunit HslU (450 aa).

Residues V29, 71–76 (GVGKTE), D261, E328, and R400 each bind ATP.

It belongs to the ClpX chaperone family. HslU subfamily. A double ring-shaped homohexamer of HslV is capped on each side by a ring-shaped HslU homohexamer. The assembly of the HslU/HslV complex is dependent on binding of ATP.

It is found in the cytoplasm. In terms of biological role, ATPase subunit of a proteasome-like degradation complex; this subunit has chaperone activity. The binding of ATP and its subsequent hydrolysis by HslU are essential for unfolding of protein substrates subsequently hydrolyzed by HslV. HslU recognizes the N-terminal part of its protein substrates and unfolds these before they are guided to HslV for hydrolysis. The polypeptide is ATP-dependent protease ATPase subunit HslU (Rickettsia akari (strain Hartford)).